The following is a 636-amino-acid chain: Biosynthetic arginine decarboxylase (636 aa).

Residue K101 is modified to N6-(pyridoxal phosphate)lysine. Substrate is bound at residue 286–296 (FDVGGGLAVDY).

Belongs to the Orn/Lys/Arg decarboxylase class-II family. SpeA subfamily. It depends on Mg(2+) as a cofactor. Pyridoxal 5'-phosphate is required as a cofactor.

It carries out the reaction L-arginine + H(+) = agmatine + CO2. It functions in the pathway amine and polyamine biosynthesis; agmatine biosynthesis; agmatine from L-arginine: step 1/1. Catalyzes the biosynthesis of agmatine from arginine. The polypeptide is Biosynthetic arginine decarboxylase (Shewanella frigidimarina (strain NCIMB 400)).